The primary structure comprises 254 residues: 3-deoxy-manno-octulosonate cytidylyltransferase (254 aa).

It belongs to the KdsB family.

It localises to the cytoplasm. It catalyses the reaction 3-deoxy-alpha-D-manno-oct-2-ulosonate + CTP = CMP-3-deoxy-beta-D-manno-octulosonate + diphosphate. Its pathway is nucleotide-sugar biosynthesis; CMP-3-deoxy-D-manno-octulosonate biosynthesis; CMP-3-deoxy-D-manno-octulosonate from 3-deoxy-D-manno-octulosonate and CTP: step 1/1. It participates in bacterial outer membrane biogenesis; lipopolysaccharide biosynthesis. In terms of biological role, activates KDO (a required 8-carbon sugar) for incorporation into bacterial lipopolysaccharide in Gram-negative bacteria. The chain is 3-deoxy-manno-octulosonate cytidylyltransferase from Chlamydia trachomatis serovar L2 (strain ATCC VR-902B / DSM 19102 / 434/Bu).